The primary structure comprises 220 residues: MKKEKAVVVFSGGQDSTTCLFWAIEQFAEVEAVTFNYNQRHKLEIDCAAEIAKELGIKHTVLDMSLLNQLAPNALTRTDMEITHEEGELPSTFVDGRNLLFLSFAAVLAKQVGARHIVTGVCETDFSGYPDCRDVFVKSLNVTLNLSMDYPFVIHTPLMWINKAETWKLSDELGAFEFVREKTLTCYNGIIGDGCGECPACQLRKAGLDTYLQEREGANN.

Residue F10 to L20 participates in ATP binding. Positions 186, 195, 198, and 201 each coordinate Zn(2+).

It belongs to the QueC family. In terms of assembly, homodimer. Zn(2+) serves as cofactor.

It catalyses the reaction 7-carboxy-7-deazaguanine + NH4(+) + ATP = 7-cyano-7-deazaguanine + ADP + phosphate + H2O + H(+). Its pathway is purine metabolism; 7-cyano-7-deazaguanine biosynthesis. Its function is as follows. Catalyzes the ATP-dependent conversion of 7-carboxy-7-deazaguanine (CDG) to 7-cyano-7-deazaguanine (preQ(0)). The chain is 7-cyano-7-deazaguanine synthase from Bacillus cereus (strain B4264).